Here is a 304-residue protein sequence, read N- to C-terminus: Oxygen-dependent coproporphyrinogen-III oxidase (304 aa).

Ser93 is a binding site for substrate. 2 residues coordinate a divalent metal cation: His97 and His107. Catalysis depends on His107, which acts as the Proton donor. Substrate is bound at residue 109–111 (NVR). Positions 146 and 176 each coordinate a divalent metal cation. Residues 241–276 (YVEFNLVYDRGTLFGLQSGGRTESILMSLPPQVRWG) form an important for dimerization region. 259–261 (GGR) is a substrate binding site.

It belongs to the aerobic coproporphyrinogen-III oxidase family. As to quaternary structure, homodimer. The cofactor is a divalent metal cation.

Its subcellular location is the cytoplasm. It catalyses the reaction coproporphyrinogen III + O2 + 2 H(+) = protoporphyrinogen IX + 2 CO2 + 2 H2O. Its pathway is porphyrin-containing compound metabolism; protoporphyrin-IX biosynthesis; protoporphyrinogen-IX from coproporphyrinogen-III (O2 route): step 1/1. In terms of biological role, involved in the heme biosynthesis. Catalyzes the aerobic oxidative decarboxylation of propionate groups of rings A and B of coproporphyrinogen-III to yield the vinyl groups in protoporphyrinogen-IX. The sequence is that of Oxygen-dependent coproporphyrinogen-III oxidase from Pseudomonas syringae pv. syringae (strain B728a).